The chain runs to 445 residues: Phosphoglucosamine mutase (445 aa).

The Phosphoserine intermediate role is filled by serine 102. 4 residues coordinate Mg(2+): serine 102, aspartate 241, aspartate 243, and aspartate 245. Phosphoserine is present on serine 102.

Belongs to the phosphohexose mutase family. Requires Mg(2+) as cofactor. In terms of processing, activated by phosphorylation.

It catalyses the reaction alpha-D-glucosamine 1-phosphate = D-glucosamine 6-phosphate. Functionally, catalyzes the conversion of glucosamine-6-phosphate to glucosamine-1-phosphate. The chain is Phosphoglucosamine mutase from Proteus mirabilis (strain HI4320).